Here is a 227-residue protein sequence, read N- to C-terminus: Germin-like protein subfamily 3 member 2 (227 aa).

A signal peptide spans 1–24 (MEANTLFLLKALCLLCFNVCFTLA). A disulfide bond links Cys34 and Cys54. N-linked (GlcNAc...) asparagine glycans are attached at residues Asn56 and Asn75. The Cupin type-1 domain occupies 68-213 (SGLKTAGNFT…AFGLSLKQIG (146 aa)). The Mn(2+) site is built by His115, His117, Glu122, and His161.

The protein belongs to the germin family. In terms of assembly, oligomer (believed to be a pentamer but probably hexamer).

It localises to the secreted. Its subcellular location is the extracellular space. It is found in the apoplast. Its function is as follows. May play a role in plant defense. Probably has no oxalate oxidase activity even if the active site is conserved. In Arabidopsis thaliana (Mouse-ear cress), this protein is Germin-like protein subfamily 3 member 2.